We begin with the raw amino-acid sequence, 215 residues long: Cytochrome b6 (215 aa).

The chain crosses the membrane as a helical span at residues Ile-32–Phe-52. Cys-35 is a heme c binding site. Residues His-86 and His-100 each coordinate heme b. 3 consecutive transmembrane segments (helical) span residues Ala-90–Phe-110, Leu-116–Tyr-136, and Leu-186–Ile-206. Residues His-187 and His-202 each coordinate heme b.

It belongs to the cytochrome b family. PetB subfamily. The 4 large subunits of the cytochrome b6-f complex are cytochrome b6, subunit IV (17 kDa polypeptide, PetD), cytochrome f and the Rieske protein, while the 4 small subunits are PetG, PetL, PetM and PetN. The complex functions as a dimer. It depends on heme b as a cofactor. Heme c serves as cofactor.

It localises to the plastid. Its subcellular location is the chloroplast thylakoid membrane. In terms of biological role, component of the cytochrome b6-f complex, which mediates electron transfer between photosystem II (PSII) and photosystem I (PSI), cyclic electron flow around PSI, and state transitions. This is Cytochrome b6 from Nicotiana tomentosiformis (Tobacco).